The sequence spans 822 residues: Stemar-13-ene synthase (822 aa).

Residues 1–10 (MMLLSSSYSG) show a composition bias toward polar residues. The segment at 1 to 29 (MMLLSSSYSGGQFPGVSPLGTRPKRSTTV) is disordered. Positions 553, 557, 698, 702, and 706 each coordinate Mg(2+). Positions 553–557 (DDLFD) match the DDXXD motif motif.

It belongs to the terpene synthase family. It depends on Mg(2+) as a cofactor.

It carries out the reaction 9alpha-copalyl diphosphate = stemar-13-ene + diphosphate. Catalyzes the conversion of syn-copalyl diphosphate to the phytoalexin precursor stemarene. In Oryza sativa subsp. japonica (Rice), this protein is Stemar-13-ene synthase (KSL8).